The primary structure comprises 189 residues: Adenylate kinase (189 aa).

Residue 12–17 participates in ATP binding; that stretch reads GSGKTT. The interval 33–62 is NMP; the sequence is STGDLLRAEVASGSELGKLIDGFISKGNLV. Residues T34, R39, 60-62, 87-90, and Q94 contribute to the AMP site; these read NLV and GYPR. Residues 129–135 form an LID region; the sequence is GRARGAD. R130 is an ATP binding site. 2 residues coordinate AMP: R132 and R144. Residue R172 participates in ATP binding.

Belongs to the adenylate kinase family. As to quaternary structure, monomer.

It is found in the cytoplasm. It carries out the reaction AMP + ATP = 2 ADP. It functions in the pathway purine metabolism; AMP biosynthesis via salvage pathway; AMP from ADP: step 1/1. In terms of biological role, catalyzes the reversible transfer of the terminal phosphate group between ATP and AMP. Plays an important role in cellular energy homeostasis and in adenine nucleotide metabolism. This is Adenylate kinase from Campylobacter concisus (strain 13826).